A 1447-amino-acid chain; its full sequence is Bud site selection protein 4 (1447 aa).

Over residues 1-16 the composition is skewed to basic and acidic residues; sequence MHDAESTVDSLLKEID. Disordered stretches follow at residues 1 to 38 and 57 to 76; these read MHDA…PHNW and NTRS…KMST. At Ser-10 the chain carries Phosphoserine. 2 stretches are compositionally biased toward polar residues: residues 22–32 and 59–76; these read TKSNITQNGSE and RSNA…KMST. Phosphoserine occurs at positions 78, 81, 91, 96, and 167. The interval 272 to 316 is disordered; the sequence is NLPSKLLNTSNNSHSDSRSPTASVEDLNISTNLPGADSSQNNPVT. Residues 277-316 show a composition bias toward polar residues; that stretch reads LLNTSNNSHSDSRSPTASVEDLNISTNLPGADSSQNNPVT. Residue Thr-365 is modified to Phosphothreonine. At Ser-367 the chain carries Phosphoserine. The tract at residues 444–479 is disordered; sequence HQESEHANEQPAIIPQKDSSEETFTELNNESEFQRN. The residue at position 511 (Ser-511) is a Phosphoserine. Residues 529–591 form a disordered region; the sequence is KTSAEEHDLS…NEEPEHVPLL (63 aa). Residues 538 to 548 show a composition bias toward polar residues; sequence SSSCEDQSVSE. Basic and acidic residues predominate over residues 549 to 580; that stretch reads ARNKDRIEEKEVETKDENIETEKDESEYHKVE. Ser-616 carries the phosphoserine modification. Residues 648–664 are compositionally biased toward polar residues; it reads ANSQFSQQSSITTASTV. The tract at residues 648–673 is disordered; that stretch reads ANSQFSQQSSITTASTVDSKKDNGST. The segment at 768–879 is interaction with IQG1; it reads EHENIPLSTH…SLWESSYELK (112 aa). Phosphoserine occurs at positions 805 and 811. The PH domain occupies 1302 to 1413; the sequence is NIYKEGYLLQ…WYNKLQEVVE (112 aa).

As to quaternary structure, interacts with AXL1, AXL2, IQG1 and SEC3. In terms of processing, phosphorylated by CDC28.

It is found in the bud neck. Its function is as follows. Required for establishment of the axial budding pattern in haploid cells. Cooperates with other bud site selection proteins to recognize a spatial landmark during mitosis and they subsequently become a landmark for downstream polarity establishment factors that coordinate axial budding and cytokinesis. Involved in the septin organization at the bud neck. This Saccharomyces cerevisiae (strain ATCC 204508 / S288c) (Baker's yeast) protein is Bud site selection protein 4 (BUD4).